We begin with the raw amino-acid sequence, 146 residues long: Leghemoglobin alpha (146 aa).

One can recognise a Globin domain in the interval alanine 3–alanine 146. 2 positions are modified to nitrated tyrosine: tyrosine 26 and tyrosine 31. Residue serine 46 coordinates heme b. The residue at position 46 (serine 46) is a Phosphoserine. Histidine 62 is an O2 binding site. 2 residues coordinate heme b: histidine 93 and lysine 96. Tyrosine 134 bears the Nitrated tyrosine mark.

The protein belongs to the plant globin family. Monomer. Nitrated mainly at Tyr-31 and, to a lower extent, at Tyr-26 and Tyr-134, in effective nodules and particularly in hypoxic conditions; this mechanism may play a protective role in the symbiosis by buffering toxic peroxynitrite NO(2)(-). Nitration level decrease during nodule senescence. In terms of processing, phosphorylation at Ser-46 disrupts the molecular environment of its porphyrin ring oxygen binding pocket, thus leading to a reduced oxygen consumption and to the delivery of oxygen O(2) to symbiosomes. Root nodules.

The protein resides in the cytoplasm. It is found in the cytosol. Its subcellular location is the nucleus. In terms of biological role, leghemoglobin that reversibly binds oxygen O(2) through a pentacoordinated heme iron. In root nodules, facilitates the diffusion of oxygen to the bacteroids while preventing the bacterial nitrogenase from being inactivated by buffering dioxygen, nitric oxide and carbon monoxide, and promoting the formation of reactive oxygen species (ROS, e.g. H(2)O(2)). This role is essential for symbiotic nitrogen fixation (SNF). In Phaseolus vulgaris (Kidney bean), this protein is Leghemoglobin alpha.